The chain runs to 154 residues: Troponin C, isoallergen Bla g 6.0301 (154 aa).

EF-hand domains lie at 11-46 (EQIS…MGQP), 47-82 (FNRR…FIIE), 87-122 (AMEK…LDEQ), and 123-154 (LTSD…MMTG). Asp-60, Asp-62, Ser-64, Arg-66, and Glu-71 together coordinate Ca(2+). Residues Asp-136, Asp-138, Ser-140, Thr-142, and Glu-147 each coordinate Ca(2+).

It belongs to the troponin C family.

Troponin is the central regulatory protein of striated muscle contraction. It consists of three components: Troponin-I (Tn-I) which is the inhibitor of actomyosin ATPase, Troponin-T (Tn-T) which contains the binding site for tropomyosin and Troponin-C (Tn-C). The binding of calcium to Tn-C abolishes the inhibitory action of Tn on actin filaments. In Blattella germanica (German cockroach), this protein is Troponin C, isoallergen Bla g 6.0301.